Consider the following 358-residue polypeptide: MKPFPRAEISSKALQNNLARLREIAPGSKVMAVVKANGYGHGLLNVAHCLDNADGFGLARPEEALALREGGVKSKLILLEGFFSQVDLTTLVEHDIDTVVHNEVQLELLESSILAKPATVWLKIDSGMHRLGFTPEQFAAVYARLEACPQVAKPINLMSHFACADEPDNPSTKVQINLFNDLIKDLPGQRSLANSAGTLYWPESQADWIRPGIALYGVSPVIGDLGGNHGLMPAMELVSQLIAVRDHKAGEPVGYGSSWYAKEDTKLGVVAIGYGDGYPRNAPEGTPVWVNGRRVPIVGRVSMDMLTVDLGINATDLIGDDAILWGKALPVEEVAEHIGTIAYELVTKLTPRVAVCLD.

Residue K35 is the Proton acceptor; specific for D-alanine of the active site. K35 bears the N6-(pyridoxal phosphate)lysine mark. R130 serves as a coordination point for substrate. Catalysis depends on Y255, which acts as the Proton acceptor; specific for L-alanine. Residue M303 coordinates substrate.

The protein belongs to the alanine racemase family. Requires pyridoxal 5'-phosphate as cofactor.

The enzyme catalyses L-alanine = D-alanine. Its pathway is amino-acid biosynthesis; D-alanine biosynthesis; D-alanine from L-alanine: step 1/1. Its function is as follows. Catalyzes the interconversion of L-alanine and D-alanine. May also act on other amino acids. This is Alanine racemase (alr) from Shewanella sediminis (strain HAW-EB3).